The primary structure comprises 317 residues: Tumor necrosis factor ligand superfamily member 11 (317 aa).

Residues 1–16 (MRRASRDYTKYLRGSE) show a composition bias toward basic and acidic residues. The tract at residues 1–43 (MRRASRDYTKYLRGSEEMGGGPGAPHEGPLHAPPPPAPHQPPA) is disordered. The Cytoplasmic segment spans residues 1–47 (MRRASRDYTKYLRGSEEMGGGPGAPHEGPLHAPPPPAPHQPPAASRS). Positions 31–41 (HAPPPPAPHQP) are enriched in pro residues. A helical; Signal-anchor for type II membrane protein membrane pass occupies residues 48–68 (MFVALLGLGLGQVVCSVALFF). Residues 69 to 317 (YFRAQMDPNR…FGAFKVRDID (249 aa)) lie on the Extracellular side of the membrane. Residues 164 to 313 (PFAHLTINAT…DATYFGAFKV (150 aa)) form the THD domain. N-linked (GlcNAc...) asparagine glycosylation is found at Asn-171 and Asn-198.

The protein belongs to the tumor necrosis factor family. As to quaternary structure, homotrimer. Interacts with TNFRSF11B. Interacts with TNFRSF11A. Interacts with FBN1 (via N-terminal domain) in a Ca(+2)-dependent manner. Interacts with TNFAIP6 (via both Link and CUB domains). In terms of processing, the soluble form of isoform 1 derives from the membrane form by proteolytic processing. The cleavage may be catalyzed by ADAM17. Highest in the peripheral lymph nodes, weak in spleen, peripheral blood Leukocytes, bone marrow, heart, placenta, skeletal muscle, stomach and thyroid.

It is found in the cell membrane. The protein resides in the cytoplasm. Its subcellular location is the secreted. Its function is as follows. Cytokine that binds to TNFRSF11B/OPG and to TNFRSF11A/RANK. Osteoclast differentiation and activation factor. Augments the ability of dendritic cells to stimulate naive T-cell proliferation. May be an important regulator of interactions between T-cells and dendritic cells and may play a role in the regulation of the T-cell-dependent immune response. May also play an important role in enhanced bone-resorption in humoral hypercalcemia of malignancy. Induces osteoclastogenesis by activating multiple signaling pathways in osteoclast precursor cells, chief among which is induction of long lasting oscillations in the intracellular concentration of Ca (2+) resulting in the activation of NFATC1, which translocates to the nucleus and induces osteoclast-specific gene transcription to allow differentiation of osteoclasts. During osteoclast differentiation, in a TMEM64 and ATP2A2-dependent manner induces activation of CREB1 and mitochondrial ROS generation necessary for proper osteoclast generation. The polypeptide is Tumor necrosis factor ligand superfamily member 11 (TNFSF11) (Homo sapiens (Human)).